A 143-amino-acid polypeptide reads, in one-letter code: Large ribosomal subunit protein uL13 (143 aa).

Belongs to the universal ribosomal protein uL13 family. In terms of assembly, part of the 50S ribosomal subunit.

In terms of biological role, this protein is one of the early assembly proteins of the 50S ribosomal subunit, although it is not seen to bind rRNA by itself. It is important during the early stages of 50S assembly. In Thermoanaerobacter pseudethanolicus (strain ATCC 33223 / 39E) (Clostridium thermohydrosulfuricum), this protein is Large ribosomal subunit protein uL13.